Here is a 147-residue protein sequence, read N- to C-terminus: Large ribosomal subunit protein uL13 (147 aa).

Belongs to the universal ribosomal protein uL13 family. As to quaternary structure, part of the 50S ribosomal subunit.

This protein is one of the early assembly proteins of the 50S ribosomal subunit, although it is not seen to bind rRNA by itself. It is important during the early stages of 50S assembly. This chain is Large ribosomal subunit protein uL13, found in Deinococcus geothermalis (strain DSM 11300 / CIP 105573 / AG-3a).